Here is a 370-residue protein sequence, read N- to C-terminus: ECF RNA polymerase sigma factor SigG (370 aa).

The segment at 63-129 is sigma-70 factor domain-2; the sequence is EPYRRELLAH…LTALEGRRRR (67 aa). A Polymerase core binding motif is present at residues 85–88; that stretch reads DLVQ. The segment at 180–232 is sigma-70 factor domain-4; it reads LAFVAALQHLSPRQRAVLLLRDVLQWKSAEVADAIGTSTVAVNSLLQRARSQL. The segment at residues 207–226 is a DNA-binding region (H-T-H motif); it reads SAEVADAIGTSTVAVNSLLQ.

It belongs to the sigma-70 factor family. ECF subfamily. In terms of assembly, interacts transiently with the RNA polymerase catalytic core formed by RpoA, RpoB, RpoC and RpoZ (2 alpha, 1 beta, 1 beta' and 1 omega subunit) to form the RNA polymerase holoenzyme that can initiate transcription.

Sigma factors are initiation factors that promote the attachment of RNA polymerase to specific initiation sites and are then released. Extracytoplasmic function (ECF) sigma factors are held in an inactive form by a cognate anti-sigma factor until released, although no anti-sigma factor is known for this protein. May be involved in host intracellular survival after infection (strains H37Rv and CDC 1551). A role in the SOS response is controversial; it has been seen in strain CDC 1551 but not in H37Rv. The protein is ECF RNA polymerase sigma factor SigG (sigG) of Mycobacterium tuberculosis (strain CDC 1551 / Oshkosh).